The chain runs to 281 residues: Acetyl-coenzyme A carboxylase carboxyl transferase subunit beta 2 (281 aa).

One can recognise a CoA carboxyltransferase N-terminal domain in the interval 26 to 281 (LLTRCPVCHE…TITQGGHQDV (256 aa)). Positions 30, 33, 48, and 51 each coordinate Zn(2+). The C4-type zinc-finger motif lies at 30–51 (CPVCHEDCYTQDLGEFKVCPHC).

This sequence belongs to the AccD/PCCB family. In terms of assembly, acetyl-CoA carboxylase is a heterohexamer composed of biotin carboxyl carrier protein (AccB), biotin carboxylase (AccC) and two subunits each of ACCase subunit alpha (AccA) and ACCase subunit beta (AccD). The cofactor is Zn(2+).

The protein localises to the cytoplasm. It carries out the reaction N(6)-carboxybiotinyl-L-lysyl-[protein] + acetyl-CoA = N(6)-biotinyl-L-lysyl-[protein] + malonyl-CoA. It functions in the pathway lipid metabolism; malonyl-CoA biosynthesis; malonyl-CoA from acetyl-CoA: step 1/1. Functionally, component of the acetyl coenzyme A carboxylase (ACC) complex. Biotin carboxylase (BC) catalyzes the carboxylation of biotin on its carrier protein (BCCP) and then the CO(2) group is transferred by the transcarboxylase to acetyl-CoA to form malonyl-CoA. The protein is Acetyl-coenzyme A carboxylase carboxyl transferase subunit beta 2 of Lactiplantibacillus plantarum (strain JDM1) (Lactobacillus plantarum).